The chain runs to 178 residues: Large ribosomal subunit protein uL6 (178 aa).

It belongs to the universal ribosomal protein uL6 family. In terms of assembly, part of the 50S ribosomal subunit.

This protein binds to the 23S rRNA, and is important in its secondary structure. It is located near the subunit interface in the base of the L7/L12 stalk, and near the tRNA binding site of the peptidyltransferase center. This chain is Large ribosomal subunit protein uL6, found in Lactococcus lactis subsp. cremoris (strain MG1363).